The sequence spans 459 residues: Transcription factor mlcR (459 aa).

A DNA-binding region (zn(2)-C6 fungal-type) is located at residues 21–53 (CDRCHAQKLKCTGSNANLVRAQCQRCQQAGLRC). Disordered regions lie at residues 64–84 (LHKE…PMTA) and 135–170 (DPES…DFEG). Residues 69–78 (AAGTTRATET) are compositionally biased toward low complexity.

It localises to the nucleus. In terms of biological role, transcription factor that regulates the gene cluster that mediates the biosynthesis of compactin, also known as mevastatin or ML-236B, and which acts as a potent competitive inhibitor of HMG-CoA reductase. Binds to the consensus-binding motif 5'-WCGG-N(6)-TCGG-3' of target genes. The protein is Transcription factor mlcR of Penicillium citrinum.